The following is a 732-amino-acid chain: Catalase-peroxidase (732 aa).

The tryptophyl-tyrosyl-methioninium (Trp-Tyr) (with M-246) cross-link spans 97-220 (WHSAGTYRTG…LAAVQMGLIY (124 aa)). The Proton acceptor role is filled by H98. The segment at residues 220-246 (YVNPEGPDGKPDPVAAGKDIRETFGRM) is a cross-link (tryptophyl-tyrosyl-methioninium (Tyr-Met) (with W-97)). H261 serves as a coordination point for heme b.

This sequence belongs to the peroxidase family. Peroxidase/catalase subfamily. Homodimer or homotetramer. Heme b is required as a cofactor. In terms of processing, formation of the three residue Trp-Tyr-Met cross-link is important for the catalase, but not the peroxidase activity of the enzyme.

It catalyses the reaction H2O2 + AH2 = A + 2 H2O. It carries out the reaction 2 H2O2 = O2 + 2 H2O. Bifunctional enzyme with both catalase and broad-spectrum peroxidase activity. This chain is Catalase-peroxidase, found in Chlorobium phaeobacteroides (strain BS1).